The chain runs to 154 residues: MGLSDGEWQLVLNVWGKVEADVAGHGQEVLIRLFKGHPETLEKFDKFKHLKSEDEMKASEDLKKHGNTVLTALGGILKKKGHHEAELTPLAQSHATKHKIPVKYLEFISEAIIQVLQSKHPGDFGADAQGAMSKALELFRNDMAAKYKELGFQG.

One can recognise a Globin domain in the interval 2–148 (GLSDGEWQLV…FRNDMAAKYK (147 aa)). Serine 4 is modified (phosphoserine). Position 65 (histidine 65) interacts with nitrite. Histidine 65 contacts O2. Phosphothreonine is present on threonine 68. Position 94 (histidine 94) interacts with heme b.

It belongs to the globin family. In terms of assembly, monomeric.

Its subcellular location is the cytoplasm. It localises to the sarcoplasm. It catalyses the reaction Fe(III)-heme b-[protein] + nitric oxide + H2O = Fe(II)-heme b-[protein] + nitrite + 2 H(+). It carries out the reaction H2O2 + AH2 = A + 2 H2O. Its function is as follows. Monomeric heme protein which primary function is to store oxygen and facilitate its diffusion within muscle tissues. Reversibly binds oxygen through a pentacoordinated heme iron and enables its timely and efficient release as needed during periods of heightened demand. Depending on the oxidative conditions of tissues and cells, and in addition to its ability to bind oxygen, it also has a nitrite reductase activity whereby it regulates the production of bioactive nitric oxide. Under stress conditions, like hypoxia and anoxia, it also protects cells against reactive oxygen species thanks to its pseudoperoxidase activity. The protein is Myoglobin (MB) of Sus scrofa (Pig).